We begin with the raw amino-acid sequence, 192 residues long: Bifunctional protein PyrR (192 aa).

Residues Ser-49–Gly-50, Arg-90, Asp-111–Thr-119, Arg-144, and Val-168 contribute to the substrate site. The PRPP-binding signature appears at Val-107–Thr-119.

Belongs to the purine/pyrimidine phosphoribosyltransferase family. PyrR subfamily.

The enzyme catalyses UMP + diphosphate = 5-phospho-alpha-D-ribose 1-diphosphate + uracil. In terms of biological role, regulates the transcription of the pyrimidine nucleotide (pyr) operon in response to exogenous pyrimidines. Functionally, also displays a weak uracil phosphoribosyltransferase activity which is not physiologically significant. This is Bifunctional protein PyrR from Corynebacterium glutamicum (strain ATCC 13032 / DSM 20300 / JCM 1318 / BCRC 11384 / CCUG 27702 / LMG 3730 / NBRC 12168 / NCIMB 10025 / NRRL B-2784 / 534).